A 407-amino-acid polypeptide reads, in one-letter code: Argininosuccinate synthase (407 aa).

ATP contacts are provided by residues Ala13–Ser21 and Ala40. Positions 91 and 96 each coordinate L-citrulline. Gly121 lines the ATP pocket. Residues Thr123, Asn127, and Asp128 each coordinate L-aspartate. Asn127 serves as a coordination point for L-citrulline. Residues Arg131, Ser182, Ser191, Glu267, and Tyr279 each coordinate L-citrulline.

This sequence belongs to the argininosuccinate synthase family. Type 1 subfamily. Homotetramer.

It localises to the cytoplasm. It catalyses the reaction L-citrulline + L-aspartate + ATP = 2-(N(omega)-L-arginino)succinate + AMP + diphosphate + H(+). Its pathway is amino-acid biosynthesis; L-arginine biosynthesis; L-arginine from L-ornithine and carbamoyl phosphate: step 2/3. The chain is Argininosuccinate synthase from Rhizobium etli (strain ATCC 51251 / DSM 11541 / JCM 21823 / NBRC 15573 / CFN 42).